The sequence spans 900 residues: MVNSGHRRQRIINCVAQLPYKIQLGETNDEWNIVPATGSSSLYSSIEYLNSEEKAKDYEQHVLGWTGEIGRESLPSRLFNSKNRDKSENGEKGENDLHAKEEREKEEDPLYLTNDQIDGITKDLRRHGKSDDHYNVDNVHPVWLLRRDQKRWRGFAENVLWPTFHYILKFSSDSGEKENLSWYDYVRFNEAYAMKIGEIYEKGDIIWIHDYYLLLLPQLLRMKFNDQDLTIAYFHHSPWPSNEYFRVLPRRKQILDGLMGADRGWFQNEGFARHFVSSCKRLLDSTSRKSKNRLGMEQYQISAYGGDIVVDSLPIGINRVKLLEDTFTKDIAQKVLAIKDAFQGKKIIVGRDRLDSVRGVVQKLRAFETFLSMYPEWRDQVVLIQVSVPSMKGGTNQLIRLEQQVNELVTSINMQYGSLNFSPVHHYYMRIPKDVYLSLLRVADLCVIASVRDGTNTTALEYVTVKSHMSNYNCYGNPLILSEFSGTSTILKDAMIINPWDSVAVAKSINRALSLSRDEKRALEDKIWPQVPTIQKWTDQFLSTLSDIVDEAHNTTDRKMTPALNRPALLEHYRQSKRRLFLFDYDGTLTPIVQDPAAAIPSARLISILQKLASDPCNQIWIISGRDQAFLNKWLGSRLPQLGLSAEHGCFYKDVDEENWINLTEKFDMSWQEKVGSIMEEFTRRTPGSFIERKKVALTWHYRRADPELGEFYASELKKELDKICADYDLDVMEGKANIEVRPKFVNKGEIVKRLVWHHHGRRQDMLNTKKEELPISEMPDFTLCLGDDFTDEDMFNQLNDIEAVWKKQYEDEVNQWGGFGLYPCTVGSASKKTVAKAHLTDPQQVLDTLGLLVGDVSLFQSAGTVELDSRGHVKHSDSSIRSEQASARYAMKRQQSYKN.

Disordered stretches follow at residues 76 to 109 (SRLF…EEDP) and 874 to 900 (VKHS…SYKN). Over residues 82–108 (KNRDKSENGEKGENDLHAKEEREKEED) the composition is skewed to basic and acidic residues.

This sequence in the C-terminal section; belongs to the trehalose phosphatase family. The protein in the N-terminal section; belongs to the glycosyltransferase 20 family. Mg(2+) is required as a cofactor.

The enzyme catalyses alpha,alpha-trehalose 6-phosphate + H2O = alpha,alpha-trehalose + phosphate. It functions in the pathway carbohydrate biosynthesis. Phosphatase catalytic subunit of the trehalose synthase complex that catalyzes the production of trehalose from glucose-6-phosphate and UDP-alpha-D-glucose in a two step process. The polypeptide is Trehalose-phosphatase (Zygosaccharomyces rouxii).